The primary structure comprises 624 residues: MYKYLMEINSIEDFKKLNSNEIKVLAEEIRHFLIESVSKTGGHLASNLGVVELTLALHQAFNSPEDKIIWDVGHQAYVHKILTGRRDQFSTLRQYKGLSGFPKRYESEHDQFDTGHSSTSISAAMGLATARDLNKDKYKVIAVIGDGAMTGGMAFEALNHIGQSQKDIIVILNDNEMSISPNVGGLSNYLNKIRTAPIYSKVKDDVEYLISNIPAIGKSVMKTAEKAKDSIKYFFVPGVLFEELGFTYIGPVDGHNYHSLYDVMNRTKNIKGPVLLHVMTTKGKGYTLAEKHPDKYHGVNSFHIETGEPISCNENLSYSEIAGKTLVECAAEDEKIVAITAAMPSGTGLNNFAKKHPERFFDVGIAEQHAATFAAGLAANGFKPFFAVYSTFFQRAYDQVIHDACIQDLPVTYLIDRAGLVGNDGETHHGSLDISFLSCIPNLTFMAPKDGIELSEMVRFAAKHNGPVAIRYPRGHSNMDSQENFSPLALGKGEITYHSGNDVLILALGTFNKMGLEICKDLEENNIFSTLMNPRFIKPMDEELIVEMVQKHKIIYTIEDNSKIGGFGTLVQVLLNDNQILKPVKVCALPDRFIEHGNVEDLYEELGLTKKQIVDQIKKEFSDL.

Thiamine diphosphate contacts are provided by residues His74 and 115-117; that span reads GHS. Position 146 (Asp146) interacts with Mg(2+). Residues 147-148, Asn175, Tyr286, and Glu367 each bind thiamine diphosphate; that span reads GA. Mg(2+) is bound at residue Asn175.

Belongs to the transketolase family. DXPS subfamily. Homodimer. Mg(2+) is required as a cofactor. The cofactor is thiamine diphosphate.

It carries out the reaction D-glyceraldehyde 3-phosphate + pyruvate + H(+) = 1-deoxy-D-xylulose 5-phosphate + CO2. Its pathway is metabolic intermediate biosynthesis; 1-deoxy-D-xylulose 5-phosphate biosynthesis; 1-deoxy-D-xylulose 5-phosphate from D-glyceraldehyde 3-phosphate and pyruvate: step 1/1. Catalyzes the acyloin condensation reaction between C atoms 2 and 3 of pyruvate and glyceraldehyde 3-phosphate to yield 1-deoxy-D-xylulose-5-phosphate (DXP). This is 1-deoxy-D-xylulose-5-phosphate synthase from Alkaliphilus oremlandii (strain OhILAs) (Clostridium oremlandii (strain OhILAs)).